A 358-amino-acid chain; its full sequence is MSTAIRSGRQSNWEAFCQWVTDTNNRIYVGWFGVLMIPCLLAATICFTIAFIAAPPVDIDGIREPVAGSLIYGNNIISGAVIPSSNAIGLHFYPIWEAASLDEWLYNGGPYQLVCFHFLIGISAYMGRQWELSYRLGMRPWICVAYSAPLSAAMAVFLVYPFGQGSFSDGMPLGISGTFNFMLVFQAEHNILMHPFHMLGVAGVFGGSLFSAMHGSLVTSSLVRETTEAESQNYGYKFGQEEETYNIVAAHGYFGRLIFQYASFNNSRSLHFFLGAWPVVGIWFTSMGISTMAFNLNGFNFNQSILDSQGRVLNTWADVLNRANLGMEVQHERNAHNFPLDLAAAESTPVALQAPAIG.

Helical transmembrane passes span 28–45 (YVGWFGVLMIPCLLAATI), 117–132 (HFLIGISAYMGRQWEL), and 141–155 (WICVAYSAPLSAAMA). H117 contacts chlorophyll a. Y125 is a pheophytin a binding site. 2 residues coordinate [CaMn4O5] cluster: D169 and E188. Residues 196 to 217 (FHMLGVAGVFGGSLFSAMHGSL) form a helical membrane-spanning segment. A chlorophyll a-binding site is contributed by H197. A quinone-binding positions include H214 and 263–264 (SF). Residue H214 participates in Fe cation binding. Fe cation is bound at residue H271. Residues 273–287 (FLGAWPVVGIWFTSM) form a helical membrane-spanning segment. 4 residues coordinate [CaMn4O5] cluster: H331, E332, D341, and A343. Positions 344–358 (AAESTPVALQAPAIG) are excised as a propeptide.

It belongs to the reaction center PufL/M/PsbA/D family. As to quaternary structure, PSII is composed of 1 copy each of membrane proteins PsbA, PsbB, PsbC, PsbD, PsbE, PsbF, PsbH, PsbI, PsbJ, PsbK, PsbL, PsbM, PsbT, PsbX, PsbY, PsbZ, Psb30/Ycf12, peripheral proteins PsbO, CyanoQ (PsbQ), PsbU, PsbV and a large number of cofactors. It forms dimeric complexes. The cofactor is The D1/D2 heterodimer binds P680, chlorophylls that are the primary electron donor of PSII, and subsequent electron acceptors. It shares a non-heme iron and each subunit binds pheophytin, quinone, additional chlorophylls, carotenoids and lipids. D1 provides most of the ligands for the Mn4-Ca-O5 cluster of the oxygen-evolving complex (OEC). There is also a Cl(-1) ion associated with D1 and D2, which is required for oxygen evolution. The PSII complex binds additional chlorophylls, carotenoids and specific lipids.. Post-translationally, tyr-160 forms a radical intermediate that is referred to as redox-active TyrZ, YZ or Y-Z. C-terminally processed by CtpA; processing is essential to allow assembly of the oxygen-evolving complex and thus photosynthetic growth.

It localises to the cellular thylakoid membrane. The catalysed reaction is 2 a plastoquinone + 4 hnu + 2 H2O = 2 a plastoquinol + O2. Its function is as follows. Photosystem II (PSII) is a light-driven water:plastoquinone oxidoreductase that uses light energy to abstract electrons from H(2)O, generating O(2) and a proton gradient subsequently used for ATP formation. It consists of a core antenna complex that captures photons, and an electron transfer chain that converts photonic excitation into a charge separation. The D1/D2 (PsbA/PsbD) reaction center heterodimer binds P680, the primary electron donor of PSII as well as several subsequent electron acceptors. The sequence is that of Photosystem II protein D1 2 from Synechococcus sp. (strain CC9605).